The primary structure comprises 932 residues: Isoleucine--tRNA ligase (932 aa).

The 'HIGH' region motif lies at 57–67 (PYANGNIHLGH). Glu552 provides a ligand contact to L-isoleucyl-5'-AMP. The 'KMSKS' region signature appears at 593–597 (KMSKS). Lys596 provides a ligand contact to ATP. Residues Cys889, Cys892, Cys911, and Cys914 each coordinate Zn(2+).

The protein belongs to the class-I aminoacyl-tRNA synthetase family. IleS type 1 subfamily. In terms of assembly, monomer. Zn(2+) serves as cofactor.

It is found in the cytoplasm. It carries out the reaction tRNA(Ile) + L-isoleucine + ATP = L-isoleucyl-tRNA(Ile) + AMP + diphosphate. Catalyzes the attachment of isoleucine to tRNA(Ile). As IleRS can inadvertently accommodate and process structurally similar amino acids such as valine, to avoid such errors it has two additional distinct tRNA(Ile)-dependent editing activities. One activity is designated as 'pretransfer' editing and involves the hydrolysis of activated Val-AMP. The other activity is designated 'posttransfer' editing and involves deacylation of mischarged Val-tRNA(Ile). In Lactococcus lactis subsp. lactis (strain IL1403) (Streptococcus lactis), this protein is Isoleucine--tRNA ligase.